The chain runs to 163 residues: Nucleotide-binding protein HAPS_2236 (163 aa).

This sequence belongs to the YajQ family.

In terms of biological role, nucleotide-binding protein. In Glaesserella parasuis serovar 5 (strain SH0165) (Haemophilus parasuis), this protein is Nucleotide-binding protein HAPS_2236.